The primary structure comprises 336 residues: F420-dependent glucose-6-phosphate dehydrogenase (336 aa).

Residue Asp39 coordinates coenzyme F420-(gamma-Glu)n. The active-site Proton donor is the His40. Coenzyme F420-(gamma-Glu)n contacts are provided by residues Thr76 and 107–108 (SG). Glu109 functions as the Proton acceptor in the catalytic mechanism. Coenzyme F420-(gamma-Glu)n-binding positions include Asn112, 177 to 178 (GG), and 180 to 181 (VV). Thr195, Lys198, Lys259, and Arg283 together coordinate substrate.

This sequence belongs to the F420-dependent glucose-6-phosphate dehydrogenase family. In terms of assembly, homodimer.

It catalyses the reaction oxidized coenzyme F420-(gamma-L-Glu)(n) + D-glucose 6-phosphate + H(+) = 6-phospho-D-glucono-1,5-lactone + reduced coenzyme F420-(gamma-L-Glu)(n). Catalyzes the coenzyme F420-dependent oxidation of glucose 6-phosphate (G6P) to 6-phosphogluconolactone. This chain is F420-dependent glucose-6-phosphate dehydrogenase, found in Tsukamurella paurometabola (strain ATCC 8368 / DSM 20162 / CCUG 35730 / CIP 100753 / JCM 10117 / KCTC 9821 / NBRC 16120 / NCIMB 702349 / NCTC 13040) (Corynebacterium paurometabolum).